A 192-amino-acid chain; its full sequence is uncharacterized protein (192 aa).

The N-terminal stretch at 1 to 18 (MNSKFILKYFILAFFLVS) is a signal peptide. Residue Cys19 is the site of N-palmitoyl cysteine attachment. The S-diacylglycerol cysteine moiety is linked to residue Cys19.

The protein localises to the cell membrane. This is an uncharacterized protein from Borreliella burgdorferi (strain ATCC 35210 / DSM 4680 / CIP 102532 / B31) (Borrelia burgdorferi).